The following is a 453-amino-acid chain: ATP-dependent protease ATPase subunit HslU (453 aa).

ATP is bound by residues Ile-18, 60–65 (GVGKTE), Asp-266, Glu-331, and Arg-403.

Belongs to the ClpX chaperone family. HslU subfamily. As to quaternary structure, a double ring-shaped homohexamer of HslV is capped on each side by a ring-shaped HslU homohexamer. The assembly of the HslU/HslV complex is dependent on binding of ATP.

It is found in the cytoplasm. Functionally, ATPase subunit of a proteasome-like degradation complex; this subunit has chaperone activity. The binding of ATP and its subsequent hydrolysis by HslU are essential for unfolding of protein substrates subsequently hydrolyzed by HslV. HslU recognizes the N-terminal part of its protein substrates and unfolds these before they are guided to HslV for hydrolysis. This chain is ATP-dependent protease ATPase subunit HslU, found in Desulforapulum autotrophicum (strain ATCC 43914 / DSM 3382 / VKM B-1955 / HRM2) (Desulfobacterium autotrophicum).